Consider the following 82-residue polypeptide: Putative defensin-like protein 48 (82 aa).

An N-terminal signal peptide occupies residues 1 to 28 (MGIKTLIIFFHIFILAVLSSNNIILTSG). Disulfide bonds link cysteine 39/cysteine 80, cysteine 43/cysteine 67, cysteine 53/cysteine 78, and cysteine 57/cysteine 79.

This sequence belongs to the DEFL family.

It localises to the secreted. The chain is Putative defensin-like protein 48 from Arabidopsis thaliana (Mouse-ear cress).